Consider the following 249-residue polypeptide: Putative [LysW]-aminoadipate/[LysW]-glutamate kinase (249 aa).

2 residues coordinate substrate: R63 and N166.

Belongs to the acetylglutamate kinase family. LysZ subfamily.

Its subcellular location is the cytoplasm. It catalyses the reaction [amino-group carrier protein]-C-terminal-N-(1,4-dicarboxybutan-1-yl)-L-glutamine + ATP = [amino-group carrier protein]-C-terminal-N-(1-carboxy-5-phosphooxy-5-oxopentan-1-yl)-L-glutamine + ADP. It carries out the reaction [amino-group carrier protein]-C-terminal-gamma-(L-glutamyl)-L-glutamate + ATP = [amino-group carrier protein]-C-terminal-gamma-(5-phospho-L-glutamyl)-L-glutamate + ADP. It functions in the pathway amino-acid biosynthesis; L-lysine biosynthesis via AAA pathway; L-lysine from L-alpha-aminoadipate (Thermus route): step 2/5. Its pathway is amino-acid biosynthesis; L-arginine biosynthesis. Involved in both the arginine and lysine biosynthetic pathways. Phosphorylates the LysW-bound precursors glutamate (for arginine biosynthesis), respectively alpha-aminoadipate (for lysine biosynthesis). The sequence is that of Putative [LysW]-aminoadipate/[LysW]-glutamate kinase from Pyrococcus furiosus (strain ATCC 43587 / DSM 3638 / JCM 8422 / Vc1).